The primary structure comprises 435 residues: Zinc finger CCCH domain-containing protein 10 (435 aa).

Positions Met1–Ala36 are disordered. A compositionally biased stretch (gly residues) spans Gly12 to Gly35. 3 C3H1-type zinc fingers span residues Ala36–Met63, Lys73–Lys99, and Lys134–Arg161. Residues Asp166 to Leu190 form a disordered region. Positions Arg168 to Thr179 are enriched in gly residues. Omega-N-methylarginine is present on residues Arg186 and Arg187. Residues Gly235 to Lys281 are a coiled coil. The span at Thr315 to Glu331 shows a compositional bias: polar residues. Positions Thr315–Ile363 are disordered. The span at Ala340–Leu359 shows a compositional bias: pro residues.

The protein localises to the nucleus. Functionally, specific regulator of miRNA biogenesis. Binds, via the C3H1-type zinc finger domains, to the binding motif 5'-GCAGCGC-3' on microRNA pri-MIR143 and negatively regulates the processing to mature microRNA. This chain is Zinc finger CCCH domain-containing protein 10 (Zc3h10), found in Mus musculus (Mouse).